A 423-amino-acid polypeptide reads, in one-letter code: Chitinase 1 (423 aa).

An N-terminal signal peptide occupies residues 1–22 (MLSFVKKSIALVAALQAVTALA). Positions 23-34 (TPISSEAGVEKR) are excised as a propeptide. A GH18 domain is found at 38 to 401 (FANAVYFTNW…STSHQGLGSQ (364 aa)). Chitin contacts are provided by residues 102–103 (GT) and 129–132 (GGWT). The active-site Proton donor is the Glu-171. Chitin contacts are provided by residues Tyr-172, 237 to 240 (MAYD), and Trp-378.

This sequence belongs to the glycosyl hydrolase 18 family. Chitinase class V subfamily.

It is found in the secreted. It catalyses the reaction Random endo-hydrolysis of N-acetyl-beta-D-glucosaminide (1-&gt;4)-beta-linkages in chitin and chitodextrins.. This chain is Chitinase 1 (CHI1), found in Aphanocladium album (Wheat rust fungus).